Here is a 247-residue protein sequence, read N- to C-terminus: Ribosomal RNA large subunit methyltransferase E (247 aa).

A disordered region spans residues 1 to 21 (MKKTTKKTAGGYGGSGSHKLY). The S-adenosyl-L-methionine site is built by Gly-88, Trp-90, Asp-111, Asp-127, and Asp-151. Lys-191 (proton acceptor) is an active-site residue.

The protein belongs to the class I-like SAM-binding methyltransferase superfamily. RNA methyltransferase RlmE family.

The protein localises to the cytoplasm. The catalysed reaction is uridine(2552) in 23S rRNA + S-adenosyl-L-methionine = 2'-O-methyluridine(2552) in 23S rRNA + S-adenosyl-L-homocysteine + H(+). In terms of biological role, specifically methylates the uridine in position 2552 of 23S rRNA at the 2'-O position of the ribose in the fully assembled 50S ribosomal subunit. The polypeptide is Ribosomal RNA large subunit methyltransferase E (Bartonella henselae (strain ATCC 49882 / DSM 28221 / CCUG 30454 / Houston 1) (Rochalimaea henselae)).